The sequence spans 445 residues: Xylose isomerase (445 aa).

Active-site residues include histidine 109 and aspartate 112. Mg(2+) is bound by residues glutamate 240, glutamate 276, histidine 279, aspartate 304, aspartate 315, aspartate 317, and aspartate 347.

Belongs to the xylose isomerase family. Homotetramer. Requires Mg(2+) as cofactor.

It localises to the cytoplasm. It carries out the reaction alpha-D-xylose = alpha-D-xylulofuranose. The polypeptide is Xylose isomerase (Xanthomonas oryzae pv. oryzae (strain MAFF 311018)).